A 295-amino-acid chain; its full sequence is MRIFVTGAAGFIGSEIVRQLLEAGHEVVGLVRSEENAAKLRAAGGTPYIGTLEDLDTLKKGVAQCDGVIHTAFVHDFSIYQEACKLDARVIEAIGEVLRGTERPLITTSVTAVLSSNGKLGTEISEVPQPPIPRQLGEVTTLKFASQGVRASILRLPPTVHGAGDHAFVPMLINVAKNKGVSAYIGNGMNCWPAVHRTDAANLFVLALEKETAGSIYHAVAEEGIPIKEIAGMIGKRLDIPVISVSSEEATEHFGFLSSFLSVDNPTSSILTQQRLGWKPTHSTLMTDLASDAYF.

It belongs to the NAD(P)-dependent epimerase/dehydratase family.

This is an uncharacterized protein from Schizosaccharomyces pombe (strain 972 / ATCC 24843) (Fission yeast).